A 29-amino-acid chain; its full sequence is Phospholemman-like protein (29 aa).

This sequence belongs to the FXYD family. In terms of processing, phosphorylated by protein kinase C.

The protein resides in the membrane. In terms of biological role, induces a hyperpolarization-activated chloride current when expressed in Xenopus oocytes. This chain is Phospholemman-like protein, found in Scyliorhinus canicula (Small-spotted catshark).